Here is a 117-residue protein sequence, read N- to C-terminus: Large ribosomal subunit protein bL20 (117 aa).

This sequence belongs to the bacterial ribosomal protein bL20 family.

Its function is as follows. Binds directly to 23S ribosomal RNA and is necessary for the in vitro assembly process of the 50S ribosomal subunit. It is not involved in the protein synthesizing functions of that subunit. This Geobacter sulfurreducens (strain ATCC 51573 / DSM 12127 / PCA) protein is Large ribosomal subunit protein bL20.